Consider the following 432-residue polypeptide: Glutamyl-tRNA reductase (432 aa).

Residues 49 to 52 (TCNR), Ser101, 106 to 108 (EPQ), and Gln112 contribute to the substrate site. Cys50 (nucleophile) is an active-site residue. 181–186 (GAGETI) lines the NADP(+) pocket. The disordered stretch occupies residues 408-432 (PEKPGYRHPPVATPIVRTDDANPAP).

It belongs to the glutamyl-tRNA reductase family. Homodimer.

The catalysed reaction is (S)-4-amino-5-oxopentanoate + tRNA(Glu) + NADP(+) = L-glutamyl-tRNA(Glu) + NADPH + H(+). The protein operates within porphyrin-containing compound metabolism; protoporphyrin-IX biosynthesis; 5-aminolevulinate from L-glutamyl-tRNA(Glu): step 1/2. Catalyzes the NADPH-dependent reduction of glutamyl-tRNA(Glu) to glutamate 1-semialdehyde (GSA). This Xanthomonas campestris pv. campestris (strain B100) protein is Glutamyl-tRNA reductase.